The primary structure comprises 399 residues: Mitochondrial glycine transporter (399 aa).

3 Solcar repeats span residues 35 to 137 (IPPY…LRSV), 164 to 251 (LSTT…CKTN), and 266 to 374 (GNWM…GRSW). Helical transmembrane passes span 41 to 66 (LAFG…TRLQ), 112 to 138 (GTAP…RSVA), 170 to 195 (LLTG…ARFE), 226 to 249 (GFTA…EACK), 270 to 296 (VVSA…KTRM), and 349 to 367 (GLGL…GWSI). Residues 379-399 (EASSSAQEAGTGTRLLDHKQV) form a disordered region.

Belongs to the mitochondrial carrier (TC 2.A.29) family. SLC25A38 subfamily.

It localises to the mitochondrion inner membrane. The catalysed reaction is glycine(in) = glycine(out). Mitochondrial glycine transporter that imports glycine into the mitochondrial matrix. Plays an important role in providing glycine for the first enzymatic step in heme biosynthesis, the condensation of glycine with succinyl-CoA to produce 5-aminolevulinate (ALA) in the mitochondrial matrix. In Mycosarcoma maydis (Corn smut fungus), this protein is Mitochondrial glycine transporter.